Reading from the N-terminus, the 486-residue chain is Malonate-semialdehyde dehydrogenase 2 (486 aa).

The NAD(+) site is built by phenylalanine 154, lysine 178, glutamate 181, arginine 182, and serine 231. Cysteine 286 serves as the catalytic Nucleophile. NAD(+) is bound at residue glutamate 385.

It belongs to the aldehyde dehydrogenase family. IolA subfamily. Homotetramer.

The catalysed reaction is 3-oxopropanoate + NAD(+) + CoA + H2O = hydrogencarbonate + acetyl-CoA + NADH + H(+). It catalyses the reaction 2-methyl-3-oxopropanoate + NAD(+) + CoA + H2O = propanoyl-CoA + hydrogencarbonate + NADH + H(+). It functions in the pathway polyol metabolism; myo-inositol degradation into acetyl-CoA; acetyl-CoA from myo-inositol: step 7/7. In terms of biological role, catalyzes the oxidation of malonate semialdehyde (MSA) and methylmalonate semialdehyde (MMSA) into acetyl-CoA and propanoyl-CoA, respectively. Is involved in a myo-inositol catabolic pathway. Bicarbonate, and not CO2, is the end-product of the enzymatic reaction. This is Malonate-semialdehyde dehydrogenase 2 from Shouchella clausii (strain KSM-K16) (Alkalihalobacillus clausii).